The primary structure comprises 590 residues: uncharacterized protein (590 aa).

The Cytoplasmic segment spans residues 1 to 68 (MKFSKPKFSM…SQRVWGPWNY (68 aa)). Residues 69 to 89 (VAFWLADSVNVNTWMIAGTAV) form a helical membrane-spanning segment. Topologically, residues 90–94 (ESGLS) are extracellular. The chain crosses the membrane as a helical span at residues 95–115 (WWEAWITVWVGYTIAAFILTI). At 116–124 (AGRAGAVYH) the chain is on the cytoplasmic side. The helical transmembrane segment at 125–145 (ISFPVLSRSSFGIWGSLWPIL) threads the bilayer. Residues 146–149 (NRAV) lie on the Extracellular side of the membrane. A helical transmembrane segment spans residues 150 to 170 (MACVWYGVQAWIGGECVTLMI). At 171–194 (RSIWPSFSHIPNTMAKSGTETYQW) the chain is on the cytoplasmic side. Residues 195–215 (VGFFIFWLISNVAIWFPVYQI) form a helical membrane-spanning segment. Residues 216–218 (RHL) lie on the Extracellular side of the membrane. Residues 219–239 (FTAKSFLAPPAAIAFLIWALV) form a helical membrane-spanning segment. Residues 240–258 (KAHGAGDAIHAKTQLSTWN) are Cytoplasmic-facing. The chain crosses the membrane as a helical span at residues 259–279 (HGWAVTAGIISCLDNFATLIV). The Extracellular segment spans residues 280 to 298 (NNPDFTRFATTPNAPIFPQ). Residues 299–319 (LITIPMGFGITTLIGVLVGSA) traverse the membrane as a helical segment. Over 320 to 390 (SKSIYGENIW…LCPMFINIRR (71 aa)) the chain is Cytoplasmic. Residues 391-411 (GGYIASIIGICMCPWNLLSSS) form a helical membrane-spanning segment. Residues 412 to 418 (NSFANSL) lie on the Extracellular side of the membrane. The helical transmembrane segment at 419 to 439 (SAYAVFLSSFAGILIADYFVI) threads the bilayer. At 440–467 (RKGYLKVDALYTINPNEPYWFTYGINLR) the chain is on the cytoplasmic side. Residues 468–488 (AFASYICGLLINVVGLAGAVG) traverse the membrane as a helical segment. The Extracellular segment spans residues 489–500 (DKVPKAALTMNN). The chain crosses the membrane as a helical span at residues 501–521 (IAYLLGIVTSFLSHLIICKIF). The Cytoplasmic portion of the chain corresponds to 522-590 (PVTACGEKFL…GIDIKESSVF (69 aa)). A disordered region spans residues 566-590 (VSYDSKEKSDDGKSGGIDIKESSVF).

It belongs to the purine-cytosine permease (2.A.39) family.

It localises to the cytoplasm. It is found in the nucleus. The protein resides in the membrane. This is an uncharacterized protein from Schizosaccharomyces pombe (strain 972 / ATCC 24843) (Fission yeast).